We begin with the raw amino-acid sequence, 240 residues long: Phosphatidylserine decarboxylase proenzyme (240 aa).

Ser-209 acts as the Schiff-base intermediate with substrate; via pyruvic acid in catalysis. Ser-209 is modified (pyruvic acid (Ser); by autocatalysis).

This sequence belongs to the phosphatidylserine decarboxylase family. PSD-A subfamily. In terms of assembly, heterodimer of a large membrane-associated beta subunit and a small pyruvoyl-containing alpha subunit. The cofactor is pyruvate. In terms of processing, is synthesized initially as an inactive proenzyme. Formation of the active enzyme involves a self-maturation process in which the active site pyruvoyl group is generated from an internal serine residue via an autocatalytic post-translational modification. Two non-identical subunits are generated from the proenzyme in this reaction, and the pyruvate is formed at the N-terminus of the alpha chain, which is derived from the carboxyl end of the proenzyme. The post-translation cleavage follows an unusual pathway, termed non-hydrolytic serinolysis, in which the side chain hydroxyl group of the serine supplies its oxygen atom to form the C-terminus of the beta chain, while the remainder of the serine residue undergoes an oxidative deamination to produce ammonia and the pyruvoyl prosthetic group on the alpha chain.

It localises to the cell membrane. The enzyme catalyses a 1,2-diacyl-sn-glycero-3-phospho-L-serine + H(+) = a 1,2-diacyl-sn-glycero-3-phosphoethanolamine + CO2. Its pathway is phospholipid metabolism; phosphatidylethanolamine biosynthesis; phosphatidylethanolamine from CDP-diacylglycerol: step 2/2. Catalyzes the formation of phosphatidylethanolamine (PtdEtn) from phosphatidylserine (PtdSer). The chain is Phosphatidylserine decarboxylase proenzyme from Mycobacterium marinum (strain ATCC BAA-535 / M).